The sequence spans 152 residues: UPF0225 protein YchJ (152 aa).

This sequence belongs to the UPF0225 family.

The sequence is that of UPF0225 protein YchJ from Escherichia coli O7:K1 (strain IAI39 / ExPEC).